We begin with the raw amino-acid sequence, 396 residues long: S-adenosylmethionine synthase (396 aa).

H15 contributes to the ATP binding site. A Mg(2+)-binding site is contributed by D17. A K(+)-binding site is contributed by E43. L-methionine is bound by residues E56 and Q99. The flexible loop stretch occupies residues Q99–R109. ATP is bound by residues D175–K177, R241–F242, D250, R256–K257, A273, and K277. D250 contributes to the L-methionine binding site. K281 provides a ligand contact to L-methionine.

The protein belongs to the AdoMet synthase family. As to quaternary structure, homotetramer; dimer of dimers. Mg(2+) is required as a cofactor. The cofactor is K(+).

It localises to the cytoplasm. The enzyme catalyses L-methionine + ATP + H2O = S-adenosyl-L-methionine + phosphate + diphosphate. It functions in the pathway amino-acid biosynthesis; S-adenosyl-L-methionine biosynthesis; S-adenosyl-L-methionine from L-methionine: step 1/1. In terms of biological role, catalyzes the formation of S-adenosylmethionine (AdoMet) from methionine and ATP. The overall synthetic reaction is composed of two sequential steps, AdoMet formation and the subsequent tripolyphosphate hydrolysis which occurs prior to release of AdoMet from the enzyme. This is S-adenosylmethionine synthase from Desulfitobacterium hafniense (strain DSM 10664 / DCB-2).